The chain runs to 481 residues: Dynein axonemal assembly factor 8 (481 aa).

Disordered stretches follow at residues 70-91 (DESG…LVPG), 131-233 (LDTK…EGRP), 306-397 (TWKV…PVAS), and 415-454 (RAFR…KKHI). A phosphoserine mark is found at Ser83, Ser145, and Ser147. Polar residues predominate over residues 144 to 155 (GSQSPPWSSQGE). Residues 163–176 (GKLKTEPSDTDFKN) are compositionally biased toward basic and acidic residues. The span at 177 to 188 (SAKRRALRRERR) shows a compositional bias: basic residues. Residues 198–211 (KVTQAAQNPASGDQ) are compositionally biased toward polar residues. Residues 310–322 (SADKLQDTEEQVA) are compositionally biased toward basic and acidic residues. The segment covering 323–336 (RTRSASAESGFQTE) has biased composition (polar residues). Position 328 is a phosphoserine (Ser328). Composition is skewed to basic and acidic residues over residues 337–349 (RVQK…RLKT) and 359–380 (RLTE…HSSS).

It is found in the dynein axonemal particle. It localises to the cytoplasm. Its function is as follows. In cyliated cells, dynein axonemal particle-specific protein required for deployment of ODA to the axoneme. Interacts with outer dynein arm (ODA) subunits. In Rattus norvegicus (Rat), this protein is Dynein axonemal assembly factor 8 (Dnaaf8).